A 385-amino-acid chain; its full sequence is Putative transport protein MT1133 (385 aa).

A run of 8 helical transmembrane segments spans residues 7–27 (LTQK…GAYF), 32–52 (FVLI…FKWF), 66–86 (LLSA…LAIV), 159–179 (SLAG…ALLV), 218–238 (FVIA…AGFH), 241–261 (FFIF…GGIV), 263–283 (IPFG…FVLL), and 319–339 (GITM…ILIV).

The protein belongs to the autoinducer-2 exporter (AI-2E) (TC 2.A.86) family.

Its subcellular location is the cell membrane. This Mycobacterium tuberculosis (strain CDC 1551 / Oshkosh) protein is Putative transport protein MT1133.